A 290-amino-acid polypeptide reads, in one-letter code: UPF0761 membrane protein YihY (290 aa).

6 helical membrane passes run 44-64 (LLSL…FPMF), 104-124 (VGAC…DSAL), 140-160 (FAVY…SLAI), 183-203 (IFPL…VPTI), 210-230 (AIVG…GFAL), and 244-264 (VLAV…IVLL).

The protein belongs to the UPF0761 family.

It localises to the cell inner membrane. The chain is UPF0761 membrane protein YihY from Escherichia coli O127:H6 (strain E2348/69 / EPEC).